Consider the following 391-residue polypeptide: Oxygen-dependent coproporphyrinogen-III oxidase, chloroplastic (391 aa).

Positions 1–13 (MASSLLTTPSQTL) are enriched in polar residues. The tract at residues 1–34 (MASSLLTTPSQTLAPNPAAARARRSSPAAAQVSF) is disordered. Low complexity predominate over residues 14–30 (APNPAAARARRSSPAAA). The segment at 125 to 134 (VLQDGNVFEK) is important for dimerization. S179 is a binding site for substrate. H193 serves as the catalytic Proton donor. Residues 195 to 197 (NYR) and 349 to 354 (GGRIES) each bind substrate. The segment at 331–366 (YVEFNLVYDRGTTFGLKTGGRIESILVSLPLTARWE) is important for dimerization.

This sequence belongs to the aerobic coproporphyrinogen-III oxidase family. In terms of assembly, homodimer.

It localises to the plastid. Its subcellular location is the chloroplast. The catalysed reaction is coproporphyrinogen III + O2 + 2 H(+) = protoporphyrinogen IX + 2 CO2 + 2 H2O. The protein operates within porphyrin-containing compound metabolism; protoporphyrin-IX biosynthesis; protoporphyrinogen-IX from coproporphyrinogen-III (O2 route): step 1/1. Involved in the heme and chlorophyll biosynthesis. Catalyzes the aerobic oxidative decarboxylation of propionate groups of rings A and B of coproporphyrinogen-III to yield the vinyl groups in protoporphyrinogen-IX. This chain is Oxygen-dependent coproporphyrinogen-III oxidase, chloroplastic (CPX), found in Hordeum vulgare (Barley).